Reading from the N-terminus, the 1123-residue chain is MPRKPRHRVPEILWRLFGNRARNLNDAIVDLIPNRNIQPEQCRCRGQGCLGCSSDKPAFLLRSDDPIHYRKLLHRCFVVLHEQTPPLLDFSPTSWWSQREIVERIIEMMQSGCDCQNVICARYDKYDQSSPILELLTSSSWEFLLKRVGHDVMVYLLQQTSIFLPLLGKKHQQVSGPPLCIKHKRTLSVHENKRKRDDNVQPPTKRQWLSSAVDDCPKDDSATITPIVGEDVDQHREKKTTKRSRIYLKRRRKQRKVNFKKVDCNAPCITPSTNGKVSTGNDEMNLHIGINGSLTDFVKQAKQVKRNKNFKFGLSETYSVIPPNHILKTLRPNCSDSKLLMNHIFGEVNVWSTTPSHGKGNCPSGSICLYHSLLKSLKNLIGKTKSSHLKMLLDKHCPVLLLQEDALKSGTTSQSSRRQKADKLPHGSSSSQTGKPKCPSVEERKLYCTNDQVVSFIWAICRYIVPESLLGTTHQMRVLRKNIAWFVSRRRNEKCTVNQFLHKVKPSDFPFFARKELCCMVNGHELQSESIRSTQQMLCTKWISWLFLEIVKKLVHFNFYATESQGGRLNIYYYRKRSWERLISKEISKALDGYVLVDDAEAESSRKKLSKFRFLPKANGVRMVLDFSSSSRSQSLRDTHAVLKDIQLKEPDVLGSSVFDHDDFYRNLCPYLIHLRSQSGELPPLYFVVADVFKAFDSVDQGKLLHVIQSFLKDEYILNRCRLVCCGKRSNWVNKILVSSDKNSNFSRFTSTVPYNALQSIVVDKGENHRVRKKDLMVWIGNMLKNNMLQLDKSFYVQIAGIPQGHRLSSLLCCFYYGHLERTLIYPFLEEASKDVSSKECSREEELIIPTSYKLLRFIDDYLFVSTSRDQASSFYHRLKHGFKDYNCFMNETKFCINFEDKEEHRCSSNRMFVGDNGVPFVRWTGLLINSRTFEVQVDYTRYLSGHISSTFSVAWQNKPVRNLRQKLCYFLVPKCHPILFDSNINSGEIVRLNIYQIFLLAAMKFHCYVYEVSRFWKLHPQTLFKFITISVRYMFRLINRRVRRINTGSSFRPVLKLYKEEVIWLGLDAYIQVLKKKNSRYRMLLIYLKSALSKHSLSQQLSSELRYATDRSNSSSLWKLNY.

2 disordered regions span residues glutamate 191–lysine 242 and glycine 410–proline 439. Residues glutamine 201–serine 210 are compositionally biased toward polar residues. The Reverse transcriptase domain occupies leucine 596–isoleucine 929. Aspartate 691, aspartate 860, and aspartate 861 together coordinate Mg(2+).

Belongs to the reverse transcriptase family. Telomerase subfamily. As to quaternary structure, component of the telomerase ribonucleoprotein complex. Interacts with POT1A.

It is found in the nucleus. It localises to the chromosome. Its subcellular location is the telomere. The catalysed reaction is DNA(n) + a 2'-deoxyribonucleoside 5'-triphosphate = DNA(n+1) + diphosphate. In terms of biological role, telomerase is a ribonucleoprotein enzyme essential for the replication of chromosome termini in most eukaryotes. It elongates telomeres. It is a reverse transcriptase that adds simple sequence repeats to chromosome ends by copying a template sequence within the RNA component of the enzyme. Required to prevent genome instability induced by breakage-fusion-bridge (BFB) cycles. Can extend completely non-telomeric sequences using RNA template in vitro. This is Telomerase reverse transcriptase (TERT) from Arabidopsis thaliana (Mouse-ear cress).